We begin with the raw amino-acid sequence, 426 residues long: Enolase (426 aa).

Glutamine 162 provides a ligand contact to (2R)-2-phosphoglycerate. Glutamate 204 acts as the Proton donor in catalysis. Residues aspartate 241, glutamate 284, and aspartate 311 each coordinate Mg(2+). (2R)-2-phosphoglycerate contacts are provided by lysine 336, arginine 365, serine 366, and lysine 387. The active-site Proton acceptor is lysine 336.

Belongs to the enolase family. Component of the RNA degradosome, a multiprotein complex involved in RNA processing and mRNA degradation. It depends on Mg(2+) as a cofactor.

The protein localises to the cytoplasm. It localises to the secreted. The protein resides in the cell surface. It carries out the reaction (2R)-2-phosphoglycerate = phosphoenolpyruvate + H2O. It functions in the pathway carbohydrate degradation; glycolysis; pyruvate from D-glyceraldehyde 3-phosphate: step 4/5. Functionally, catalyzes the reversible conversion of 2-phosphoglycerate (2-PG) into phosphoenolpyruvate (PEP). It is essential for the degradation of carbohydrates via glycolysis. This chain is Enolase, found in Hydrogenovibrio crunogenus (strain DSM 25203 / XCL-2) (Thiomicrospira crunogena).